Here is a 266-residue protein sequence, read N- to C-terminus: Short-chain dehydrogenase/reductase atnB (266 aa).

Positions 13, 57, and 85 each coordinate NADP(+). Residues Ser147 and Tyr166 each act as proton donor in the active site. 4 residues coordinate NADP(+): Tyr166, Lys170, Val199, and Thr201. The active-site Lowers pKa of active site Tyr is Lys170.

This sequence belongs to the short-chain dehydrogenases/reductases (SDR) family.

It functions in the pathway secondary metabolite biosynthesis; terpenoid biosynthesis. Short-chain dehydrogenase/reductase; part of the gene cluster that mediates the biosynthesis of the meroterpenoids arthripenoids. The pathway begins with the HR-PKS atnH that catalyzes two chain-extension steps to form a reduced triketide, which then primes the SAT domain in the NR-PKS atnG to initiate three more cycles of extension to give a linear hexaketide corresponding to the polyketide part of arthripenoids. The FAD-dependent monooxygenase atnJ then performs an oxidative decarboxylation at C11 of the atnH/atnG product, via an electrophilic aromatic hydroxylation with concomitant ipso-decarboxylation. The membrane-bound polyprenyl transferase atnF then introduces a farnesyl group before the FAD-dependent monooxygenase atnK functions as the first epoxidase on terminal C12'-C13' olefin, followed by a second epoxidation on C7'-C8' catalyzed by atnA. The terpene cyclase/mutase atnI then initiates the sequential tricyclic ring formation through protonation of the terminal epoxide and catalyzes the regioselective and stereoselective 6/6/6-tricyclic ring formation. The cytochrome P450 monooxygenase atnM is responsible for hydroxylating both C1' and C10'. The next steps may involve ketoreduction and acetyl transfer by the ketoreductase atnB and the acetyltransferase atnC, and lead to the production of arthripenoid B, the final biosynthetic product of the atn cluster. The hydroquinone moiety in arthripenoid B is prone to undergo spontaneous oxidation to afford a benzoquinone compound, a key intermediate for generating structure diversity. For instance, addition of a cysteine followed by ring contraction gives arthripenoid A, tautomerization gives the main product arthripenoid C, addition of a molecular of water or amine affords arthripenoid D or E, respectively, and loss of one water forms arthripenoid F. This is Short-chain dehydrogenase/reductase atnB from Arthrinium sp.